A 353-amino-acid polypeptide reads, in one-letter code: Fe(3+) ions import ATP-binding protein FbpC (353 aa).

One can recognise an ABC transporter domain in the interval 9–239; it reads VTFENVTKKF…PASAFIADFM (231 aa). 41 to 48 is a binding site for ATP; that stretch reads GPSGCGKT.

It belongs to the ABC transporter superfamily. Fe(3+) ion importer (TC 3.A.1.10) family. The complex is composed of two ATP-binding proteins (FbpC), two transmembrane proteins (FbpB) and a solute-binding protein (FbpA).

Its subcellular location is the cell inner membrane. The enzyme catalyses Fe(3+)(out) + ATP + H2O = Fe(3+)(in) + ADP + phosphate + H(+). In terms of biological role, part of the ABC transporter complex FbpABC involved in Fe(3+) ions import. Responsible for energy coupling to the transport system. This is Fe(3+) ions import ATP-binding protein FbpC from Brucella suis biovar 1 (strain 1330).